A 171-amino-acid chain; its full sequence is Adenine phosphoribosyltransferase (171 aa).

This sequence belongs to the purine/pyrimidine phosphoribosyltransferase family. Homodimer.

The protein localises to the cytoplasm. The catalysed reaction is AMP + diphosphate = 5-phospho-alpha-D-ribose 1-diphosphate + adenine. It participates in purine metabolism; AMP biosynthesis via salvage pathway; AMP from adenine: step 1/1. Functionally, catalyzes a salvage reaction resulting in the formation of AMP, that is energically less costly than de novo synthesis. The sequence is that of Adenine phosphoribosyltransferase from Citrifermentans bemidjiense (strain ATCC BAA-1014 / DSM 16622 / JCM 12645 / Bem) (Geobacter bemidjiensis).